A 242-amino-acid polypeptide reads, in one-letter code: Exosome complex component ski6 (242 aa).

It belongs to the RNase PH family. As to quaternary structure, component of the RNA exosome complex. Specifically part of the catalytically inactive RNA exosome core complex (Exo-9) which may associate with the catalytic subunits rrp6 and dis3 in cytoplasmic- and nuclear-specific RNA exosome complex forms. Exo-9 is formed by a hexameric base ring of RNase PH domain-containing subunits and a cap ring consisting of csl4, rrp4 and rrp40.

The protein localises to the cytoplasm. It localises to the nucleus. The protein resides in the nucleolus. Non-catalytic component of the RNA exosome complex which has 3'-&gt;5' exoribonuclease activity and participates in a multitude of cellular RNA processing and degradation events. In the nucleus, the RNA exosome complex is involved in proper maturation of stable RNA species such as rRNA, snRNA and snoRNA, in the elimination of RNA processing by-products and non-coding 'pervasive' transcripts, such as antisense RNA species and cryptic unstable transcripts (CUTs), and of mRNAs with processing defects, thereby limiting or excluding their export to the cytoplasm. In the cytoplasm, the RNA exosome complex is involved in general mRNA turnover and in RNA surveillance pathways, preventing translation of aberrant mRNAs. The catalytic inactive RNA exosome core complex of 9 subunits (Exo-9) is proposed to play a pivotal role in the binding and presentation of RNA for ribonucleolysis, and to serve as a scaffold for the association with catalytic subunits and accessory proteins or complexes. ski6 is part of the hexameric ring of RNase PH domain-containing subunits proposed to form a central channel which threads RNA substrates for degradation. The chain is Exosome complex component ski6 (ski6) from Schizosaccharomyces pombe (strain 972 / ATCC 24843) (Fission yeast).